Reading from the N-terminus, the 648-residue chain is PTS system N-acetylglucosamine-specific EIICBA component (648 aa).

Residue Met1 is modified to N-formylmethionine. One can recognise a PTS EIIC type-1 domain in the interval 1 to 371 (MNILGFFQRL…FNLKTPGRED (371 aa)). The next 12 helical transmembrane spans lie at 16–36 (LPIA…PDLL), 38–58 (VAFI…IFAI), 70–90 (GAAA…MVTI), 92–112 (PEIN…GAAY), 132–152 (FVPI…GYVW), 159–179 (IHAG…IFGF), 192–212 (VLNT…GTVF), 232–252 (GFFP…YFAA), 260–280 (VGGM…TEPL), 282–302 (FLFM…TGIS), 303–323 (LFVA…GAID), and 339–359 (MLLV…SLVI). The PTS EIIB type-1 domain occupies 390–472 (TQLATNYIAA…KKVVARGPVA (83 aa)). Residue Cys412 is the Phosphocysteine intermediate; for EIIB activity of the active site. Cys412 is subject to Phosphocysteine; by EIIA. Residues 517–621 (DEAFASKAVG…SMISPVVCSN (105 aa)) form the PTS EIIA type-1 domain. Zn(2+) is bound by residues His554 and His569. The Tele-phosphohistidine intermediate; for EIIA activity role is filled by His569. His569 is modified (phosphohistidine; by HPr).

Zn(2+) is required as a cofactor. Post-translationally, 60% of isolated protein was N-formylated.

Its subcellular location is the cell inner membrane. It carries out the reaction N(pros)-phospho-L-histidyl-[protein] + N-acetyl-D-glucosamine(out) = N-acetyl-D-glucosamine 6-phosphate(in) + L-histidyl-[protein]. With respect to regulation, P-chloromercuribenzoate inhibits the accumulation of both N-acetyl-D-glucosamine and antibiotic streptozotocin (2-deoxy-2-(3-methyl-3-nitrosoureido)-D-glucopyranose). N-acetyl-D-glucosamine is a competitive inhibitor for the uptake of streptozotocin. The phosphoenolpyruvate-dependent sugar phosphotransferase system (sugar PTS), a major carbohydrate active transport system, catalyzes the phosphorylation of incoming sugar substrates concomitantly with their translocation across the cell membrane. This system is involved in N-acetylglucosamine transport. It can also transport and phosphorylate the antibiotic streptozotocin. Could play a significant role in the recycling of peptidoglycan. The protein is PTS system N-acetylglucosamine-specific EIICBA component of Escherichia coli (strain K12).